The chain runs to 135 residues: Transmembrane protein 107 (135 aa).

Helical transmembrane passes span 7-27 (LVPA…TIFW), 55-75 (VALS…LSGV), 83-103 (ALLS…FVFH), and 110-130 (YWII…FLLL).

The protein resides in the membrane. May play a role in cilia formation and embryonic patterning. In Danio rerio (Zebrafish), this protein is Transmembrane protein 107 (tmem107).